A 111-amino-acid polypeptide reads, in one-letter code: Large ribosomal subunit protein bL20c (111 aa).

It belongs to the bacterial ribosomal protein bL20 family.

Its subcellular location is the plastid. The protein localises to the chloroplast. In terms of biological role, binds directly to 23S ribosomal RNA and is necessary for the in vitro assembly process of the 50S ribosomal subunit. It is not involved in the protein synthesizing functions of that subunit. This Ostreococcus tauri protein is Large ribosomal subunit protein bL20c.